The primary structure comprises 101 residues: MPRLCVYMLVLVLALATFSEASWKPRSQLQDASSGPGTNEDLEQRQFNKLGSASHHRRQLGPQGPQHFIADLSKKQRPRMEEEEEAYGWMDFGRRSAEEDQ.

A signal peptide spans 1 to 21 (MPRLCVYMLVLVLALATFSEA). The interval 23–101 (WKPRSQLQDA…FGRRSAEEDQ (79 aa)) is disordered. Over residues 25–37 (PRSQLQDASSGPG) the composition is skewed to polar residues. Position 87 is a sulfotyrosine (Tyr-87). Phe-92 is modified (phenylalanine amide). Basic and acidic residues predominate over residues 92 to 101 (FGRRSAEEDQ). Ser-96 is modified (phosphoserine). The propeptide occupies 96 to 101 (SAEEDQ).

The protein belongs to the gastrin/cholecystokinin family. Sulfation enhances proteolytic processing, and blocks peptide degradation. Levels of sulfation differ between proteolytically-cleaved gastrins and between tissues. As to expression, abundantly expressed in the stomach and duodenum. Low levels in brain, ovary and pancreas.

Its subcellular location is the secreted. Functionally, gastrin stimulates the stomach mucosa to produce and secrete hydrochloric acid and the pancreas to secrete its digestive enzymes. It also stimulates smooth muscle contraction and increases blood circulation and water secretion in the stomach and intestine. The sequence is that of Gastrin (Gast) from Mus musculus (Mouse).